The primary structure comprises 409 residues: UV excision repair protein RAD23 homolog B (409 aa).

The region spanning 1 to 79 (MQVTLKTLQQ…VVVMVTKPKA (79 aa)) is the Ubiquitin-like domain. Residues 80–175 (VSTPAPATTQ…STSGDSSRSN (96 aa)) are disordered. Low complexity predominate over residues 81 to 143 (STPAPATTQQ…SSEPAPASAA (63 aa)). Positions 144–153 (KQEKPAEKPA) are enriched in basic and acidic residues. Phosphothreonine is present on Thr155. The residue at position 160 (Ser160) is a Phosphoserine. The segment covering 160-175 (SPTATDSTSGDSSRSN) has biased composition (polar residues). Thr164 is modified (phosphothreonine). Residue Ser174 is modified to Phosphoserine. The residue at position 186 (Thr186) is a Phosphothreonine. A UBA 1 domain is found at 188 to 228 (QSYENMVTEIMSMGYEREQVIAALRASFNNPDRAVEYLLMG). A Phosphoserine modification is found at Ser199. At Tyr202 the chain carries Phosphotyrosine. The tract at residues 236–276 (QAVVDPPQAASTGAPQSSAVAAAAATTTATTTTTSSGGHPL) is disordered. The span at 252-271 (SSAVAAAAATTTATTTTTSS) shows a compositional bias: low complexity. The STI1 domain occupies 274–317 (HPLEFLRNQPQFQQMRQIIQQNPSLLPALLQQIGRENPQLLQQI). In terms of domain architecture, UBA 2 spans 364–404 (PQEKEAIERLKALGFPEGLVIQAYFACEKNENLAANFLLQQ).

This sequence belongs to the RAD23 family. In terms of assembly, component of the XPC complex composed of XPC, RAD23B and CETN2. Interacts with NGLY1 and PSMC1. Interacts with ATXN3. Interacts with PSMD4 and PSMC5. Interacts with AMFR. Interacts with VCP; the interaction is indirect and mediated by NGLY1.

Its subcellular location is the nucleus. The protein localises to the cytoplasm. Its function is as follows. Multiubiquitin chain receptor involved in modulation of proteasomal degradation. Binds to polyubiquitin chains. Proposed to be capable to bind simultaneously to the 26S proteasome and to polyubiquitinated substrates and to deliver ubiquitinated proteins to the proteasome. May play a role in endoplasmic reticulum-associated degradation (ERAD) of misfolded glycoproteins by association with PNGase and delivering deglycosylated proteins to the proteasome. In terms of biological role, involved in global genome nucleotide excision repair (GG-NER) by acting as component of the XPC complex. Cooperatively with CETN2 appears to stabilize XPC. May protect XPC from proteasomal degradation. Functionally, the XPC complex is proposed to represent the first factor bound at the sites of DNA damage and together with other core recognition factors, XPA, RPA and the TFIIH complex, is part of the pre-incision (or initial recognition) complex. The XPC complex recognizes a wide spectrum of damaged DNA characterized by distortions of the DNA helix such as single-stranded loops, mismatched bubbles or single-stranded overhangs. The orientation of XPC complex binding appears to be crucial for inducing a productive NER. XPC complex is proposed to recognize and to interact with unpaired bases on the undamaged DNA strand which is followed by recruitment of the TFIIH complex and subsequent scanning for lesions in the opposite strand in a 5'-to-3' direction by the NER machinery. Cyclobutane pyrimidine dimers (CPDs) which are formed upon UV-induced DNA damage esacpe detection by the XPC complex due to a low degree of structural perurbation. Instead they are detected by the UV-DDB complex which in turn recruits and cooperates with the XPC complex in the respective DNA repair. In vitro, the XPC:RAD23B dimer is sufficient to initiate NER; it preferentially binds to cisplatin and UV-damaged double-stranded DNA and also binds to a variety of chemically and structurally diverse DNA adducts. XPC:RAD23B contacts DNA both 5' and 3' of a cisplatin lesion with a preference for the 5' side. XPC:RAD23B induces a bend in DNA upon binding. XPC:RAD23B stimulates the activity of DNA glycosylases TDG and SMUG1. In Homo sapiens (Human), this protein is UV excision repair protein RAD23 homolog B (RAD23B).